The primary structure comprises 736 residues: DNA topoisomerase 1 (736 aa).

The region spanning 2–113 (KHLIIVESPA…SYPRIVFHEI (112 aa)) is the Toprim domain. Positions 8 and 82 each coordinate Mg(2+). The region spanning 129–552 (DMSKVNAQQA…DFYYPFMDKI (424 aa)) is the Topo IA-type catalytic domain. An interaction with DNA region spans residues 163 to 168 (SAGRVQ). The active-site O-(5'-phospho-DNA)-tyrosine intermediate is the Y297. 4 consecutive C4-type zinc fingers follow at residues 572–598 (CPKC…YPKC), 616–642 (CEKC…YPEC), 663–689 (CPEC…YPKC), and 702–725 (CEKC…CIKC).

The protein belongs to the type IA topoisomerase family. In terms of assembly, monomer. It depends on Mg(2+) as a cofactor.

It carries out the reaction ATP-independent breakage of single-stranded DNA, followed by passage and rejoining.. Its function is as follows. Releases the supercoiling and torsional tension of DNA, which is introduced during the DNA replication and transcription, by transiently cleaving and rejoining one strand of the DNA duplex. Introduces a single-strand break via transesterification at a target site in duplex DNA. The scissile phosphodiester is attacked by the catalytic tyrosine of the enzyme, resulting in the formation of a DNA-(5'-phosphotyrosyl)-enzyme intermediate and the expulsion of a 3'-OH DNA strand. The free DNA strand then undergoes passage around the unbroken strand, thus removing DNA supercoils. Finally, in the religation step, the DNA 3'-OH attacks the covalent intermediate to expel the active-site tyrosine and restore the DNA phosphodiester backbone. This Helicobacter pylori (strain ATCC 700392 / 26695) (Campylobacter pylori) protein is DNA topoisomerase 1.